Reading from the N-terminus, the 387-residue chain is Probable 1-alkyl-2-acetylglycerophosphocholine esterase (387 aa).

The signal sequence occupies residues 1–17 (MLVQGTIICALVANAIA). 2 N-linked (GlcNAc...) asparagine glycosylation sites follow: Asn51 and Asn141. Ser227 functions as the Nucleophile in the catalytic mechanism. The active-site Charge relay system is Asp250. Residue Asn283 is glycosylated (N-linked (GlcNAc...) asparagine). His313 (charge relay system) is an active-site residue.

The protein belongs to the AB hydrolase superfamily. Lipase family.

The protein resides in the secreted. It catalyses the reaction a 1-O-alkyl-2-acetyl-sn-glycero-3-phosphocholine + H2O = a 1-O-alkyl-sn-glycero-3-phosphocholine + acetate + H(+). In Arthroderma benhamiae (strain ATCC MYA-4681 / CBS 112371) (Trichophyton mentagrophytes), this protein is Probable 1-alkyl-2-acetylglycerophosphocholine esterase.